Here is an 878-residue protein sequence, read N- to C-terminus: Alanine--tRNA ligase (878 aa).

Residues H570, H574, C672, and H676 each coordinate Zn(2+). A disordered region spans residues G844–A864. Positions A855–A864 are enriched in low complexity.

It belongs to the class-II aminoacyl-tRNA synthetase family. The cofactor is Zn(2+).

Its subcellular location is the cytoplasm. It carries out the reaction tRNA(Ala) + L-alanine + ATP = L-alanyl-tRNA(Ala) + AMP + diphosphate. Catalyzes the attachment of alanine to tRNA(Ala) in a two-step reaction: alanine is first activated by ATP to form Ala-AMP and then transferred to the acceptor end of tRNA(Ala). Also edits incorrectly charged Ser-tRNA(Ala) and Gly-tRNA(Ala) via its editing domain. The sequence is that of Alanine--tRNA ligase from Paramagnetospirillum magneticum (strain ATCC 700264 / AMB-1) (Magnetospirillum magneticum).